Consider the following 424-residue polypeptide: Enolase (424 aa).

Q162 contacts (2R)-2-phosphoglycerate. Residue E204 is the Proton donor of the active site. The Mg(2+) site is built by D241, E284, and D311. (2R)-2-phosphoglycerate is bound by residues K336, R365, S366, and K387. K336 (proton acceptor) is an active-site residue.

The protein belongs to the enolase family. It depends on Mg(2+) as a cofactor.

Its subcellular location is the cytoplasm. The protein localises to the secreted. It localises to the cell surface. It catalyses the reaction (2R)-2-phosphoglycerate = phosphoenolpyruvate + H2O. Its pathway is carbohydrate degradation; glycolysis; pyruvate from D-glyceraldehyde 3-phosphate: step 4/5. Functionally, catalyzes the reversible conversion of 2-phosphoglycerate (2-PG) into phosphoenolpyruvate (PEP). It is essential for the degradation of carbohydrates via glycolysis. This Rhizobium leguminosarum bv. trifolii (strain WSM2304) protein is Enolase.